Here is a 446-residue protein sequence, read N- to C-terminus: MSILARDRNIAVIGLGKTGLSCADYLTRRGYGFCVMDTRENPSGLAELNAINPDVPVVTGKLDQDMLARAAEIWLSPGVPLSHPDLQAVKGQVKICGDVDVFSREANAPILAITGSNGKSTVTTLVGEMAKACGVNVAVGGNLGTPVLDLLADEVELYVVELSSFQLETTDRLGALAATVLNLSEDHMDRYADMMAYHLAKLRVFYGCRRQVLNRDDALAQPPLSREAEITWFTLKTPEPGQYGVLEEKDGAWLAYGAEKLLPVEQMRIRGKHNWSNALAALALADAAGLEREPCLQALREFTGLTHRCEWVADKDGVAYINDSKATNVGATQAALAGLGPVTSGGIVLICGGQGKGQDFTPLAPAVKEWVSTLIIIGEDGPKLKEALAGGVMALSAETMEEAVKLAAEKSSPGDLVLLSPACASFDMFKNYEDRGDQFKQWVRAL.

115-121 (GSNGKST) lines the ATP pocket.

This sequence belongs to the MurCDEF family.

The protein resides in the cytoplasm. It carries out the reaction UDP-N-acetyl-alpha-D-muramoyl-L-alanine + D-glutamate + ATP = UDP-N-acetyl-alpha-D-muramoyl-L-alanyl-D-glutamate + ADP + phosphate + H(+). It participates in cell wall biogenesis; peptidoglycan biosynthesis. Functionally, cell wall formation. Catalyzes the addition of glutamate to the nucleotide precursor UDP-N-acetylmuramoyl-L-alanine (UMA). The chain is UDP-N-acetylmuramoylalanine--D-glutamate ligase from Hahella chejuensis (strain KCTC 2396).